Reading from the N-terminus, the 309-residue chain is Glutaminase (309 aa).

Substrate contacts are provided by serine 64, asparagine 114, glutamate 160, asparagine 167, tyrosine 191, tyrosine 243, and valine 261.

It belongs to the glutaminase family. As to quaternary structure, homotetramer.

It catalyses the reaction L-glutamine + H2O = L-glutamate + NH4(+). The protein is Glutaminase of Methylobacterium sp. (strain 4-46).